The sequence spans 166 residues: Small ribosomal subunit protein cS23z (166 aa).

Belongs to the chloroplast-specific ribosomal protein cS23 family. Part of the 30S ribosomal subunit.

The protein resides in the plastid. It is found in the chloroplast. Its function is as follows. Component of the chloroplast ribosome (chloro-ribosome), a dedicated translation machinery responsible for the synthesis of chloroplast genome-encoded proteins, including proteins of the transcription and translation machinery and components of the photosynthetic apparatus. The protein is Small ribosomal subunit protein cS23z of Arabidopsis thaliana (Mouse-ear cress).